Reading from the N-terminus, the 633-residue chain is Pollen receptor-like kinase 3 (633 aa).

The first 19 residues, 1–19 (MTAVLFLCFLLICFSFTPS), serve as a signal peptide directing secretion. Asn-22 and Asn-37 each carry an N-linked (GlcNAc...) asparagine glycan. Cys-53 and Cys-62 are disulfide-bonded. LRR repeat units follow at residues 90-115 (LPNL…KLPG), 117-137 (KSLL…FFKE), 138-162 (TPQL…LMQL), 163-186 (AGLE…TDGN), and 188-210 (VLKS…ISDR). N-linked (GlcNAc...) asparagine glycosylation is present at Asn-123. Cysteines 224 and 232 form a disulfide. An N-linked (GlcNAc...) asparagine glycan is attached at Asn-246. A helical membrane pass occupies residues 249 to 269 (AKAIFMVILFLLIFLFVVAII). Residues 294–314 (VEVRVPDSIKKPIDSSKKRSN) are compositionally biased toward basic and acidic residues. Positions 294–339 (VEVRVPDSIKKPIDSSKKRSNAEGSSKKGSSHNGKGAGGGPGSGMG) are disordered. Over residues 328 to 338 (KGAGGGPGSGM) the composition is skewed to gly residues. Residues 358 to 633 (KAAAEVLGNG…IVRRIERVTL (276 aa)) form the Protein kinase domain. ATP is bound by residues 364-372 (LGNGSLGSA) and Lys-386. Ser-438 bears the Phosphoserine mark. Thr-458 is subject to Phosphothreonine. At Ser-535 the chain carries Phosphoserine.

This sequence belongs to the protein kinase superfamily. Ser/Thr protein kinase family. As to quaternary structure, interacts in vitro with ROPGEF1 (via PRONE domain). Interacts with PRK6. As to expression, expressed in pollen and/or in flowers, but not in leaves.

Its subcellular location is the membrane. The enzyme catalyses L-seryl-[protein] + ATP = O-phospho-L-seryl-[protein] + ADP + H(+). It carries out the reaction L-threonyl-[protein] + ATP = O-phospho-L-threonyl-[protein] + ADP + H(+). Its activity is regulated as follows. The phosphorylation activity is calcium-independent. Functionally, receptor-like kinase involved in the control of pollen germination and pollen tube polar growth. Can phosphorylate ROPGEF1 in vitro. This Arabidopsis thaliana (Mouse-ear cress) protein is Pollen receptor-like kinase 3.